Here is a 256-residue protein sequence, read N- to C-terminus: Thiazole synthase (256 aa).

The active-site Schiff-base intermediate with DXP is the K95. 1-deoxy-D-xylulose 5-phosphate contacts are provided by residues G156, A182 to G183, and N204 to T205.

This sequence belongs to the ThiG family. As to quaternary structure, homotetramer. Forms heterodimers with either ThiH or ThiS.

The protein localises to the cytoplasm. The enzyme catalyses [ThiS sulfur-carrier protein]-C-terminal-Gly-aminoethanethioate + 2-iminoacetate + 1-deoxy-D-xylulose 5-phosphate = [ThiS sulfur-carrier protein]-C-terminal Gly-Gly + 2-[(2R,5Z)-2-carboxy-4-methylthiazol-5(2H)-ylidene]ethyl phosphate + 2 H2O + H(+). The protein operates within cofactor biosynthesis; thiamine diphosphate biosynthesis. Functionally, catalyzes the rearrangement of 1-deoxy-D-xylulose 5-phosphate (DXP) to produce the thiazole phosphate moiety of thiamine. Sulfur is provided by the thiocarboxylate moiety of the carrier protein ThiS. In vitro, sulfur can be provided by H(2)S. This chain is Thiazole synthase, found in Salmonella enteritidis PT4 (strain P125109).